The sequence spans 803 residues: Translation initiation factor IF-2 (803 aa).

Disordered stretches follow at residues 95–125 (PVVE…EKAE) and 138–209 (EVKE…KLEQ). Residues 111-121 (VPLTSDTTNLN) show a composition bias toward polar residues. Positions 138–155 (EVKEEAKKTPSEKKETPK) are enriched in basic and acidic residues. Over residues 156-167 (KGPRKETRRSRK) the composition is skewed to basic residues. The segment covering 168–188 (PDKEDKWEREELHMTKLVEER) has biased composition (basic and acidic residues). The 170-residue stretch at 302 to 471 (PRAPVVTIMG…LLQAEVLELK (170 aa)) folds into the tr-type G domain. Residues 311–318 (GHVDHGKT) form a G1 region. 311 to 318 (GHVDHGKT) provides a ligand contact to GTP. The tract at residues 336–340 (GITQH) is G2. The interval 357-360 (DTPG) is G3. GTP is bound by residues 357 to 361 (DTPGH) and 411 to 414 (NKID). The tract at residues 411–414 (NKID) is G4. The tract at residues 447–449 (SAK) is G5.

It belongs to the TRAFAC class translation factor GTPase superfamily. Classic translation factor GTPase family. IF-2 subfamily.

The protein resides in the cytoplasm. In terms of biological role, one of the essential components for the initiation of protein synthesis. Protects formylmethionyl-tRNA from spontaneous hydrolysis and promotes its binding to the 30S ribosomal subunits. Also involved in the hydrolysis of GTP during the formation of the 70S ribosomal complex. In Coxiella burnetii (strain CbuG_Q212) (Coxiella burnetii (strain Q212)), this protein is Translation initiation factor IF-2.